A 509-amino-acid polypeptide reads, in one-letter code: 3-isopropylmalate dehydratase large subunit, chloroplastic (509 aa).

Positions 1 to 24 (MASVISSSPFLCKSSSKSDLGISS) are enriched in low complexity. The disordered stretch occupies residues 1 to 25 (MASVISSSPFLCKSSSKSDLGISSF). Residues 1–47 (MASVISSSPFLCKSSSKSDLGISSFPKSSQISIHRCQKKSISRKIVS) constitute a chloroplast transit peptide. Positions 376, 445, and 448 each coordinate [4Fe-4S] cluster.

It belongs to the aconitase/IPM isomerase family. Heterodimer of the large LEUC/IIL1 subunit and the small LEUD (SSU1, SSU2 or SSU3) subunits. The cofactor is [4Fe-4S] cluster. As to expression, expressed in roots, leaves, stems and flowers. Expressed at low levels in siliques.

The protein resides in the plastid. Its subcellular location is the chloroplast stroma. The catalysed reaction is (2R,3S)-3-isopropylmalate = (2S)-2-isopropylmalate. It carries out the reaction a 2-(omega-methylsulfanyl)alkylmalate = a 2-(omega-methylsulfanyl)alkylmaleate + H2O. The enzyme catalyses 2-(3-methylsulfanyl)propylmalate = 2-(2-methylsulfanyl)propylmaleate + H2O. It catalyses the reaction a 3-(omega-methylsulfanyl)alkylmalate = a 2-(omega-methylsulfanyl)alkylmaleate + H2O. The catalysed reaction is 2-(2-methylsulfanyl)ethylmalate = 2-(2-methylsulfanyl)ethylmaleate + H2O. It carries out the reaction 3-(2-methylsulfanyl)ethylmalate = 2-(2-methylsulfanyl)ethylmaleate + H2O. The enzyme catalyses 3-(3-methylsulfanyl)propylmalate = 2-(2-methylsulfanyl)propylmaleate + H2O. The protein operates within amino-acid biosynthesis; L-leucine biosynthesis; L-leucine from 3-methyl-2-oxobutanoate: step 2/4. Its function is as follows. Catalyzes the isomerization between 2-isopropylmalate and 3-isopropylmalate, via the formation of 2-isopropylmaleate. Functions in both the biosynthesis of leucine and in the methionine chain elongation pathway of aliphatic glucosinolate formation. This is 3-isopropylmalate dehydratase large subunit, chloroplastic from Arabidopsis thaliana (Mouse-ear cress).